The chain runs to 257 residues: NAD-capped RNA hydrolase NudC (257 aa).

Arginine 69 serves as a coordination point for substrate. Residues cysteine 98 and cysteine 101 each coordinate Zn(2+). Position 111 (glutamate 111) interacts with substrate. Zn(2+)-binding residues include cysteine 116 and cysteine 119. Tyrosine 124 contributes to the substrate binding site. In terms of domain architecture, Nudix hydrolase spans 125-248 (PQIAPCIIVA…TVARRLIEDT (124 aa)). A divalent metal cation contacts are provided by alanine 158, glutamate 174, and glutamate 178. A Nudix box motif is present at residues 159-180 (GFVEVGETLEQAVAREVMEESG). Residue 192–199 (QPWPFPQS) participates in substrate binding. Position 219 (glutamate 219) interacts with a divalent metal cation. Alanine 241 provides a ligand contact to substrate.

The protein belongs to the Nudix hydrolase family. NudC subfamily. Homodimer. The cofactor is Mg(2+). It depends on Mn(2+) as a cofactor. Requires Zn(2+) as cofactor.

The catalysed reaction is a 5'-end NAD(+)-phospho-ribonucleoside in mRNA + H2O = a 5'-end phospho-adenosine-phospho-ribonucleoside in mRNA + beta-nicotinamide D-ribonucleotide + 2 H(+). The enzyme catalyses NAD(+) + H2O = beta-nicotinamide D-ribonucleotide + AMP + 2 H(+). It catalyses the reaction NADH + H2O = reduced beta-nicotinamide D-ribonucleotide + AMP + 2 H(+). Its function is as follows. mRNA decapping enzyme that specifically removes the nicotinamide adenine dinucleotide (NAD) cap from a subset of mRNAs by hydrolyzing the diphosphate linkage to produce nicotinamide mononucleotide (NMN) and 5' monophosphate mRNA. The NAD-cap is present at the 5'-end of some mRNAs and stabilizes RNA against 5'-processing. Has preference for mRNAs with a 5'-end purine. Catalyzes the hydrolysis of a broad range of dinucleotide pyrophosphates. The sequence is that of NAD-capped RNA hydrolase NudC from Salmonella agona (strain SL483).